The chain runs to 400 residues: CCA-adding enzyme (400 aa).

Positions 28 and 31 each coordinate ATP. Residues G28 and R31 each coordinate CTP. 2 residues coordinate Mg(2+): D41 and D43. ATP contacts are provided by R112, D155, R158, R161, and R164. Residues R112, D155, R158, R161, and R164 each coordinate CTP.

Belongs to the tRNA nucleotidyltransferase/poly(A) polymerase family. Bacterial CCA-adding enzyme type 3 subfamily. Homodimer. It depends on Mg(2+) as a cofactor.

The catalysed reaction is a tRNA precursor + 2 CTP + ATP = a tRNA with a 3' CCA end + 3 diphosphate. The enzyme catalyses a tRNA with a 3' CCA end + 2 CTP + ATP = a tRNA with a 3' CCACCA end + 3 diphosphate. In terms of biological role, catalyzes the addition and repair of the essential 3'-terminal CCA sequence in tRNAs without using a nucleic acid template. Adds these three nucleotides in the order of C, C, and A to the tRNA nucleotide-73, using CTP and ATP as substrates and producing inorganic pyrophosphate. tRNA 3'-terminal CCA addition is required both for tRNA processing and repair. Also involved in tRNA surveillance by mediating tandem CCA addition to generate a CCACCA at the 3' terminus of unstable tRNAs. While stable tRNAs receive only 3'-terminal CCA, unstable tRNAs are marked with CCACCA and rapidly degraded. This chain is CCA-adding enzyme, found in Oceanobacillus iheyensis (strain DSM 14371 / CIP 107618 / JCM 11309 / KCTC 3954 / HTE831).